A 632-amino-acid chain; its full sequence is Probable electron transfer flavoprotein-ubiquinone oxidoreductase, mitochondrial (632 aa).

Residue 93-107 (VCIVGAGPAGLSAAI) coordinates FAD. The [4Fe-4S] cluster site is built by Cys575, Cys601, Cys604, and Cys607. Residues 592-621 (KRFVINSQNCVHCKTCDIKDPLQGIQWKTP) form the 4Fe-4S ferredoxin-type domain.

It belongs to the ETF-QO/FixC family. [4Fe-4S] cluster serves as cofactor. The cofactor is FAD.

The protein localises to the mitochondrion inner membrane. It catalyses the reaction a ubiquinone + reduced [electron-transfer flavoprotein] = a ubiquinol + oxidized [electron-transfer flavoprotein] + H(+). Functionally, accepts electrons from ETF and reduces ubiquinone. This is Probable electron transfer flavoprotein-ubiquinone oxidoreductase, mitochondrial from Schizosaccharomyces pombe (strain 972 / ATCC 24843) (Fission yeast).